A 380-amino-acid chain; its full sequence is Shedu protein SduA (380 aa).

Only component of antiviral defense system Shedu. Expression of Shedu in B.subtilis (strain BEST7003) confers resistance to phages phi105, phi29, rho14 and to a lesser extent to SPP1. May be an endonuclease. This chain is Shedu protein SduA, found in Bacillus cereus (strain B4264).